The primary structure comprises 258 residues: Retron Ec83 putative HNH endonuclease (258 aa).

Putative HNH endonuclease component of antiviral defense system retron Ec83, composed of a non-coding RNA (ncRNA), a reverse transcriptase (RT), a probable ATPase and this protein. Expression of retron Ec78 confers protection against bacteriophage T2, T4 and T6. At multiplicity of infection (MOI) of 0.02 cultures slow growth when infected with T4 but do not collapse, at MOI 2 cultures enter growth stasis. The protein is Retron Ec83 putative HNH endonuclease of Escherichia coli.